A 234-amino-acid polypeptide reads, in one-letter code: Proteasome subunit beta (234 aa).

The tract at residues 1–35 (MNPDLNMNPHDSGRTDPYAPELGEIATDEGDGENV) is disordered. Residues 1 to 39 (MNPDLNMNPHDSGRTDPYAPELGEIATDEGDGENVTKTG) constitute a propeptide, removed in mature form; by autocatalysis. Threonine 40 serves as the catalytic Nucleophile.

This sequence belongs to the peptidase T1B family. As to quaternary structure, the 20S proteasome core is composed of 14 alpha and 14 beta subunits that assemble into four stacked heptameric rings, resulting in a barrel-shaped structure. The two inner rings, each composed of seven catalytic beta subunits, are sandwiched by two outer rings, each composed of seven alpha subunits. The catalytic chamber with the active sites is on the inside of the barrel. Has a gated structure, the ends of the cylinder being occluded by the N-termini of the alpha-subunits. Is capped at one or both ends by the proteasome regulatory ATPase, PAN.

It is found in the cytoplasm. It carries out the reaction Cleavage of peptide bonds with very broad specificity.. With respect to regulation, the formation of the proteasomal ATPase PAN-20S proteasome complex, via the docking of the C-termini of PAN into the intersubunit pockets in the alpha-rings, triggers opening of the gate for substrate entry. Interconversion between the open-gate and close-gate conformations leads to a dynamic regulation of the 20S proteasome proteolysis activity. Functionally, component of the proteasome core, a large protease complex with broad specificity involved in protein degradation. This Halorhabdus utahensis (strain DSM 12940 / JCM 11049 / AX-2) protein is Proteasome subunit beta.